The following is a 458-amino-acid chain: Sulfite efflux pump SSU1 (458 aa).

The Cytoplasmic portion of the chain corresponds to 1–11; it reads MVANWVLALTR. Residues 12-32 traverse the membrane as a helical segment; it reads QFDPFMFMMVMGVGISSNILY. Over 33-48 the chain is Extracellular; the sequence is SFPYPARWLRICSYIM. A helical membrane pass occupies residues 49–69; the sequence is FAIACLIFIAVQALQILHLIV. Residues 70–89 lie on the Cytoplasmic side of the membrane; sequence YIKEKSFREYFNDFFRNMKH. The helical transmembrane segment at 90-110 threads the bilayer; the sequence is NLFWGTYPMGLVTIINFLGAL. At 111 to 135 the chain is on the extracellular side; the sequence is SKANTTKSPTNARNLMIFVYVLWWY. The helical transmembrane segment at 136–156 threads the bilayer; sequence DLAVCLVIAWGISFLIWHDYY. Topologically, residues 157 to 176 are cytoplasmic; it reads PLEGIGNYPSYNIKMASENM. A helical transmembrane segment spans residues 177–197; it reads KSVLLLDIIPLVVVASSCGTF. The Extracellular segment spans residues 198–220; it reads TMSEIFFHAFNRNIQLITLVICA. Residues 221 to 241 form a helical membrane-spanning segment; the sequence is LTWLHAIIFVFILIAIYFWSL. The Cytoplasmic segment spans residues 242–252; it reads YINKIPPMTQV. A helical transmembrane segment spans residues 253 to 275; sequence FTLFLLLGPMGQGSFGVLLLTDN. At 276-309 the chain is on the extracellular side; it reads IKKYAGKYYPTDNITREQEILTIAVPWCFKILGM. A helical membrane pass occupies residues 310-330; sequence VSAMALLAMGYFFTVISVVSI. At 331–350 the chain is on the cytoplasmic side; that stretch reads LSYYNKKEIENETGKVKRVY. Residues 351–371 traverse the membrane as a helical segment; the sequence is TFHKGFWGMTFPMGTMSLGNE. The Extracellular portion of the chain corresponds to 372–387; the sequence is ELYVQYNQYVPLYAFR. Residues 388–408 form a helical membrane-spanning segment; sequence VLGTIYGGVCVCWSILCLLCT. The Cytoplasmic portion of the chain corresponds to 409–458; the sequence is LHEYSKKMLHAARKSSLFSESGTEKTTVSPYNSIESVEESNSALDFTRLA. Phosphoserine is present on residues Ser444, Ser448, and Ser450.

It belongs to the tellurite-resistance/dicarboxylate transporter (TDT) family.

It localises to the cell membrane. Involved in efflux of free sulfite. Mutations in the SSU1 gene cause sensitivity to sulfite. This Saccharomyces cerevisiae (strain ATCC 204508 / S288c) (Baker's yeast) protein is Sulfite efflux pump SSU1 (SSU1).